The primary structure comprises 582 residues: Vesicular glutamate transporter 2 (582 aa).

At 1-71 (MESVKQRILA…CTCFGLPRRY (71 aa)) the chain is on the cytoplasmic side. The helical transmembrane segment at 72–92 (IIAIMSGLGFCISFGIRCNLG) threads the bilayer. Residues 93–125 (VAIVDMVNNSTIHRGGKVIKEKAKFNWDPETVG) are Vesicular-facing. N-linked (GlcNAc...) asparagine glycosylation is found at N100 and N101. A helical membrane pass occupies residues 126 to 146 (MIHGSFFWGYIITQIPGGYIA). The Cytoplasmic portion of the chain corresponds to 147-148 (SR). Residues 149 to 169 (LAANRVFGAAILLTSTLNMLI) traverse the membrane as a helical segment. Residues 170 to 177 (PSAARVHY) are Vesicular-facing. The helical transmembrane segment at 178–198 (GCVIFVRILQGLVEGVTYPAC) threads the bilayer. At 199–216 (HGIWSKWAPPLERSRLAT) the chain is on the cytoplasmic side. The helical transmembrane segment at 217-237 (TSFCGSYAGAVIAMPLAGILV) threads the bilayer. Over 238 to 244 (QYTGWSS) the chain is Vesicular. Residues 245–265 (VFYVYGSFGMVWYMFWLLVSY) form a helical membrane-spanning segment. Residues 266-310 (ESPAKHPTITDEERRYIEESIGESANLLGAMEKFKTPWRKFFTSM) lie on the Cytoplasmic side of the membrane. The helical transmembrane segment at 311–331 (PVYAIIVANFCRSWTFYLLLI) threads the bilayer. Over 332-349 (SQPAYFEEVFGFEISKVG) the chain is Vesicular. A helical transmembrane segment spans residues 350–370 (MLSAVPHLVMTIIVPIGGQIA). Over 371–386 (DFLRSKQILSTTTVRK) the chain is Cytoplasmic. Residues 387 to 407 (IMNCGGFGMEATLLLVVGYSH) traverse the membrane as a helical segment. The Vesicular portion of the chain corresponds to 408–409 (TR). A helical membrane pass occupies residues 410–430 (GVAISFLVLAVGFSGFAISGF). Over 431-443 (NVNHLDIAPRYAS) the chain is Cytoplasmic. A helical transmembrane segment spans residues 444–464 (ILMGISNGVGTLSGMVCPIIV). The Vesicular segment spans residues 465 to 477 (GAMTKNKSREEWQ). N470 is a glycosylation site (N-linked (GlcNAc...) asparagine). The chain crosses the membrane as a helical span at residues 478–498 (YVFLIAALVHYGGVIFYAIFA). Residues 499 to 582 (SGEKQPWADP…HSYKDRVDYS (84 aa)) lie on the Cytoplasmic side of the membrane.

It belongs to the major facilitator superfamily. Sodium/anion cotransporter family. VGLUT subfamily. Predominantly expressed in adult brain. Expressed in amygdala, caudate nucleus, cerebral cortex, frontal lobe, hippocampus, medulla, occipital lobe, putamen, spinal cord, substantia nigra, subthalamic nucleus, temporal lobe and thalamus.

The protein localises to the cytoplasmic vesicle. Its subcellular location is the secretory vesicle. It is found in the synaptic vesicle membrane. It localises to the synapse. The protein resides in the synaptosome. The protein localises to the cell membrane. The enzyme catalyses L-glutamate(out) = L-glutamate(in). It carries out the reaction 3 Na(+)(out) + phosphate(out) = 3 Na(+)(in) + phosphate(in). It catalyses the reaction phosphate(in) = phosphate(out). The catalysed reaction is K(+)(in) + H(+)(out) = K(+)(out) + H(+)(in). The enzyme catalyses chloride(in) = chloride(out). Chloride channel activity is allosterically activated by lumenal H(+) and Cl(-) leading to synaptic vesicles acidification. The L-glutamate transport activity is allosterically activated by lumenal H(+) and Cl(-). The allosteric requirement for H(+) efficiently prevents non-vesicular efflux across the plasma membrane. The L-glutamate uniporter activity exhibits a biphasic dependence on chloride concentration. Multifunctional transporter that transports L-glutamate as well as multiple ions such as chloride, proton, potassium, sodium and phosphate. At the synaptic vesicle membrane, mainly functions as a uniporter which transports preferentially L-glutamate but also, phosphate from the cytoplasm into synaptic vesicles at presynaptic nerve terminals of excitatory neural cells. The L-glutamate or phosphate uniporter activity is electrogenic and is driven by the proton electrochemical gradient, mainly by the electrical gradient established by the vacuolar H(+)-ATPase across the synaptic vesicle membrane. In addition, functions as a chloride channel that allows the chloride permeation through the synaptic vesicle membrane therefore affects the proton electrochemical gradient and promotes synaptic vesicles acidification. Moreover, functions as a vesicular K(+)/H(+) antiport allowing to maintain the electrical gradient and to decrease chemical gradient and therefore sustain vesicular glutamate uptake. The vesicular H(+)/H(+) antiport activity is electroneutral. At the plasma membrane, following exocytosis, functions as a symporter of Na(+) and phosphate from the extracellular space to the cytoplasm allowing synaptic phosphate homeostasis regulation. The symporter activity is driven by an inside negative membrane potential and is electrogenic. Also involved in the regulation of retinal hyaloid vessel regression during postnatal development. May also play a role in the endocrine glutamatergic system of other tissues such as pineal gland and pancreas. The protein is Vesicular glutamate transporter 2 of Homo sapiens (Human).